Reading from the N-terminus, the 135-residue chain is Proteasome assembly chaperone 3 (135 aa).

Belongs to the PSMG3 family.

Chaperone protein which promotes assembly of the 20S proteasome. May cooperate with psmg1-psmg2 heterodimers to orchestrate the correct assembly of proteasomes. This chain is Proteasome assembly chaperone 3 (psmg3), found in Nematostella vectensis (Starlet sea anemone).